Here is a 742-residue protein sequence, read N- to C-terminus: Kanadaptin (742 aa).

Over residues 1 to 16 the composition is skewed to polar residues; the sequence is MADILSQSETLASQDL. The interval 1–112 is disordered; the sequence is MADILSQSET…PPWGGPATAP (112 aa). Low complexity predominate over residues 27–43; sequence VSPAARSKAPASSSSNP. The residue at position 28 (serine 28) is a Phosphoserine. Basic and acidic residues predominate over residues 72–82; that stretch reads GDFRSLQEEQS. A Phosphoserine modification is found at serine 90. Over residues 96–106 the composition is skewed to pro residues; sequence RAPPYQEPPWG. Residues 135–195 form the FHA domain; it reads CLFGRLSGCD…HGTFLNKTRI (61 aa). Residues 254 to 282 are disordered; sequence LGEDSDEEEEMDTSERKINAGSQDDEMGC. Acidic residues predominate over residues 256–265; that stretch reads EDSDEEEEMD. Serine 258 and serine 412 each carry phosphoserine. Lysine 441 participates in a covalent cross-link: Glycyl lysine isopeptide (Lys-Gly) (interchain with G-Cter in SUMO2). Residues 443-476 are a coiled coil; it reads ETFESLVAKLNDAERELSEISERLKASSQVLSES. At serine 476 the chain carries Phosphoserine. Residues 565–742 are disordered; sequence LKTGTVGKLP…RTHLNDKYGY (178 aa). The segment covering 591–606 has biased composition (acidic residues); sequence PEVEEEEEEEEEEEKE. Residues 607–619 are compositionally biased toward basic and acidic residues; sequence KEEHEKKKLEDGS. Phosphoserine occurs at positions 655 and 658. A compositionally biased stretch (low complexity) spans 699–708; the sequence is PGPGKLPPTL. Basic and acidic residues predominate over residues 732–742; that stretch reads GRTHLNDKYGY.

In terms of tissue distribution, ubiquitously expressed.

The protein resides in the nucleus. It localises to the cytoplasm. The polypeptide is Kanadaptin (SLC4A1AP) (Homo sapiens (Human)).